The following is a 312-amino-acid chain: Protein phosphatase 2A catalytic subunit B (312 aa).

Positions 55, 57, 83, and 115 each coordinate Mn(2+). His116 (proton donor) is an active-site residue. Residues His165 and His240 each coordinate Mn(2+).

The protein belongs to the PPP phosphatase family. PP-2A subfamily. Component of the Sca1 complex composed of at least gefA, gefH, scaA, phr, and the protein phosphatase 2A subunits pppA and pho2B. Mn(2+) serves as cofactor.

The protein localises to the cell membrane. It carries out the reaction O-phospho-L-seryl-[protein] + H2O = L-seryl-[protein] + phosphate. The enzyme catalyses O-phospho-L-threonyl-[protein] + H2O = L-threonyl-[protein] + phosphate. Its function is as follows. Component of the Sca1 complex, a regulator of cell motility, chemotaxis and signal relay. The Sca1 complex is recruited to the plasma membrane in a chemoattractant- and F-actin-dependent manner and is enriched at the leading edge of chemotaxing cells where it regulates F-actin dynamics and signal relay by controlling the activation of rasC and the downstream target of rapamycin complex 2 (TORC2)-Akt/protein kinase B (PKB) pathway. The polypeptide is Protein phosphatase 2A catalytic subunit B (Dictyostelium discoideum (Social amoeba)).